The chain runs to 739 residues: Nucleoprotein (739 aa).

A coiled-coil region spans residues 334 to 363 (VNVGEQYQQLREAATEAEKQLQQYAESREL). Disordered regions lie at residues 414–475 (RPNL…YHDD) and 493–641 (DDNK…DIGQ). The span at 531–546 (SDNNQQSADSEEQGGQ) shows a compositional bias: polar residues. Over residues 570–579 (TLMDQGDDDP) the composition is skewed to acidic residues. A compositionally biased stretch (basic and acidic residues) spans 614–624 (AEAHEPPHKSS). Residues 625–634 (NEPAETSQLN) are compositionally biased toward polar residues.

The protein belongs to the filoviruses nucleoprotein family. Homooligomer. Homomultimerizes to form the nucleocapsid. Binds to viral genomic RNA. Interacts with VP35 and VP30 to form the nucleocapsid. Interacts with host PPP2R5C; this interaction leads to VP30 dephosphorylation and viral transcription. Interacts with VP24; this interaction facilitates nucleocapsid assembly and genome packaging. Interacts with matrix protein VP40; this interaction allows recruitment of the nucleocapsid into progeny virions. Interacts with host STAU1. Interacts with host NXF1 (via RNA-binding domain); this interaction recruits NXF1 to the inclusion bodies were viral replication takes place, probably to export viral mRNA-NXF1 complexes from these sites. Interacts with host CCDC92; this interaction sequesters NP in the host cytoplasm. Interacts with host TRIM14. Phosphorylated and O-glycosylated by host. Acetylated by host EP300 in vitro.

It localises to the virion. The protein resides in the host cytoplasm. Oligomerizes into helical capsid to encapsidate the viral genome, protecting it from nucleases and the cellular innate immune response. VP35 binds to and stabilizes monomeric NP, keeping it soluble. Upon virus replication, NP is recruited to bind cooperatively viral genomic RNA and VP35 is released. The encapsidated genomic RNA is termed the nucleocapsid and serves as template for transcription and replication. The nucleocapsid is helical with a pitch of 10.81 NP per turn and a diameter of about 22nm. Each NP binds to six nucleotides of viral genomic RNA, three being exposed to the solvant and three hidden into the nucleocapsid. Also recruits host PPP2R5C phosphatase to dephosphorylate VP30 and thereby promote viral transcription. Upon virion assembly and budding, NP binds to VP24 and possibly host STAU1. The sequence is that of Nucleoprotein (NP) from Reston ebolavirus (strain Reston-89) (REBOV).